We begin with the raw amino-acid sequence, 348 residues long: tRNA N6-adenosine threonylcarbamoyltransferase (348 aa).

The Fe cation site is built by His-115 and His-119. Substrate is bound by residues 138-142, Asp-171, Gly-184, and Asn-278; that span reads LVSGG. A Fe cation-binding site is contributed by Asp-306.

Belongs to the KAE1 / TsaD family. Fe(2+) is required as a cofactor.

The protein resides in the cytoplasm. The enzyme catalyses L-threonylcarbamoyladenylate + adenosine(37) in tRNA = N(6)-L-threonylcarbamoyladenosine(37) in tRNA + AMP + H(+). In terms of biological role, required for the formation of a threonylcarbamoyl group on adenosine at position 37 (t(6)A37) in tRNAs that read codons beginning with adenine. Is involved in the transfer of the threonylcarbamoyl moiety of threonylcarbamoyl-AMP (TC-AMP) to the N6 group of A37, together with TsaE and TsaB. TsaD likely plays a direct catalytic role in this reaction. The sequence is that of tRNA N6-adenosine threonylcarbamoyltransferase from Methylibium petroleiphilum (strain ATCC BAA-1232 / LMG 22953 / PM1).